The primary structure comprises 189 residues: Protein CotJC (189 aa).

Belongs to the manganese catalase family.

Its function is as follows. The cotJ operon proteins affect spore coat composition. They are either required for the normal formation of the inner layers of the coat or are themselves structural components of the coat. This is Protein CotJC (cotJC) from Bacillus subtilis (strain 168).